The following is a 509-amino-acid chain: Maturase K (509 aa).

It belongs to the intron maturase 2 family. MatK subfamily.

The protein resides in the plastid. Its subcellular location is the chloroplast. Its function is as follows. Usually encoded in the trnK tRNA gene intron. Probably assists in splicing its own and other chloroplast group II introns. This Nicotiana alata (Winged tobacco) protein is Maturase K.